A 504-amino-acid polypeptide reads, in one-letter code: Glycerol kinase (504 aa).

ADP is bound at residue Thr-13. ATP contacts are provided by Thr-13, Thr-14, and Ser-15. A sn-glycerol 3-phosphate-binding site is contributed by Thr-13. Arg-17 is an ADP binding site. Sn-glycerol 3-phosphate is bound by residues Arg-83, Glu-84, and Tyr-135. Residues Arg-83, Glu-84, and Tyr-135 each coordinate glycerol. His-231 carries the phosphohistidine; by HPr modification. Asp-245 lines the sn-glycerol 3-phosphate pocket. Positions 245 and 246 each coordinate glycerol. Residues Thr-267 and Gly-310 each coordinate ADP. 4 residues coordinate ATP: Thr-267, Gly-310, Gln-314, and Gly-411. ADP-binding residues include Gly-411 and Asn-415.

It belongs to the FGGY kinase family. As to quaternary structure, homotetramer and homodimer (in equilibrium). Post-translationally, the phosphoenolpyruvate-dependent sugar phosphotransferase system (PTS), including enzyme I, and histidine-containing protein (HPr) are required for the phosphorylation, which leads to the activation of the enzyme.

It carries out the reaction glycerol + ATP = sn-glycerol 3-phosphate + ADP + H(+). The protein operates within polyol metabolism; glycerol degradation via glycerol kinase pathway; sn-glycerol 3-phosphate from glycerol: step 1/1. Its activity is regulated as follows. Activated by phosphorylation and inhibited by fructose 1,6-bisphosphate (FBP). In terms of biological role, key enzyme in the regulation of glycerol uptake and metabolism. Catalyzes the phosphorylation of glycerol to yield sn-glycerol 3-phosphate. This chain is Glycerol kinase, found in Ligilactobacillus salivarius (strain UCC118) (Lactobacillus salivarius).